The primary structure comprises 141 residues: Hemoglobin subunit alpha (141 aa).

The region spanning 1-141 (VLSANDKANV…VSTVLTSKYR (141 aa)) is the Globin domain. Residue Ser-3 is modified to Phosphoserine. Lys-7 and Lys-11 each carry N6-succinyllysine. Lys-16 is modified (N6-acetyllysine; alternate). Lys-16 carries the N6-succinyllysine; alternate modification. Phosphotyrosine is present on Tyr-24. At Ser-35 the chain carries Phosphoserine. Lys-40 is subject to N6-succinyllysine. Residue Ser-49 is modified to Phosphoserine. His-58 contributes to the O2 binding site. His-87 serves as a coordination point for heme b. Ser-102 carries the phosphoserine modification. At Thr-108 the chain carries Phosphothreonine. Residues Ser-124 and Ser-131 each carry the phosphoserine modification. A phosphothreonine mark is found at Thr-134 and Thr-137. Phosphoserine is present on Ser-138.

It belongs to the globin family. In terms of assembly, heterotetramer of two alpha chains and two beta chains. In terms of tissue distribution, red blood cells.

Its function is as follows. Involved in oxygen transport from the lung to the various peripheral tissues. In terms of biological role, hemopressin acts as an antagonist peptide of the cannabinoid receptor CNR1. Hemopressin-binding efficiently blocks cannabinoid receptor CNR1 and subsequent signaling. The chain is Hemoglobin subunit alpha (HBA) from Suncus murinus (Asian house shrew).